Here is a 1888-residue protein sequence, read N- to C-terminus: Fatty acid synthase subunit alpha (1888 aa).

Positions 98 to 118 are disordered; sequence DLAPVEEPNAEEQTGAAATPA. The region spanning 146 to 221 is the Carrier domain; sequence VKASLLLHVL…ETFQDTFAGS (76 aa). Ser-181 carries the post-translational modification O-(pantetheine 4'-phosphoryl)serine. The interval 675–874 is beta-ketoacyl reductase; sequence DKYVLITGAG…CGAIIGWTRG (200 aa). A Ketosynthase family 3 (KS3) domain is found at 1119 to 1657; the sequence is KQMIQEVVIE…QKGAQAVAVH (539 aa). Residues Cys-1305, His-1542, and His-1583 each act as for beta-ketoacyl synthase activity in the active site. Mg(2+)-binding residues include Asp-1774, Val-1775, and Glu-1776. Acetyl-CoA-binding positions include 1774–1776, Tyr-1800, Ser-1810, 1819–1829, 1843–1846, and 1873–1875; these read DVE, EAVFKSLGVKS, REAG, and ISH. Residues Ser-1874 and His-1875 each coordinate Mg(2+).

Belongs to the thiolase-like superfamily. Fungal fatty acid synthetase subunit alpha family. As to quaternary structure, fatty acid synthase is composed of alpha and beta subunits.

It catalyses the reaction acetyl-CoA + n malonyl-CoA + 2n NADPH + 4n H(+) = a long-chain-acyl-CoA + n CoA + n CO2 + 2n NADP(+).. The enzyme catalyses a fatty acyl-[ACP] + malonyl-[ACP] + H(+) = a 3-oxoacyl-[ACP] + holo-[ACP] + CO2. The catalysed reaction is a (3R)-hydroxyacyl-[ACP] + NADP(+) = a 3-oxoacyl-[ACP] + NADPH + H(+). Functionally, fatty acid synthetase catalyzes the formation of long-chain fatty acids from acetyl-CoA, malonyl-CoA and NADPH. The alpha subunit contains domains for: acyl carrier protein, 3-oxoacyl-[acyl-carrier-protein] reductase, and 3-oxoacyl-[acyl-carrier-protein] synthase. In this species, higher amounts of C18 than C16 fatty acids are produced. This is Fatty acid synthase subunit alpha (FAS2) from Lachancea kluyveri (Yeast).